Consider the following 196-residue polypeptide: ATP-dependent Clp protease proteolytic subunit (196 aa).

Catalysis depends on S101, which acts as the Nucleophile. The active site involves H126.

Belongs to the peptidase S14 family. Component of the chloroplastic Clp protease core complex.

The protein resides in the plastid. It is found in the chloroplast stroma. The enzyme catalyses Hydrolysis of proteins to small peptides in the presence of ATP and magnesium. alpha-casein is the usual test substrate. In the absence of ATP, only oligopeptides shorter than five residues are hydrolyzed (such as succinyl-Leu-Tyr-|-NHMec, and Leu-Tyr-Leu-|-Tyr-Trp, in which cleavage of the -Tyr-|-Leu- and -Tyr-|-Trp bonds also occurs).. Functionally, cleaves peptides in various proteins in a process that requires ATP hydrolysis. Has a chymotrypsin-like activity. Plays a major role in the degradation of misfolded proteins. The protein is ATP-dependent Clp protease proteolytic subunit of Vitis vinifera (Grape).